The sequence spans 449 residues: Wilms tumor protein (449 aa).

The interval 48-84 is disordered; that stretch reads YGSLGGPAPPPAPPPPPPPPPHSFIKQEPSWGGAEPH. Positions 54-69 are enriched in pro residues; sequence PAPPPAPPPPPPPPPH. Glycyl lysine isopeptide (Lys-Gly) (interchain with G-Cter in SUMO) cross-links involve residues K73 and K177. Positions 236-244 match the 9aaTAD motif; the sequence is MTWNQMNLG. 3 consecutive C2H2-type zinc fingers follow at residues 323-347, 353-377, and 383-405; these read FMCA…SRKH, YQCD…QRRH, and FQCK…TRTH. Important for interaction with target DNA regions lie at residues 367–381 and 393–401; these read SDQL…TGVK and SRSDHLKTH. The KTS motif signature appears at 408–410; it reads KTS. The C2H2-type 4 zinc-finger motif lies at 414–438; it reads FSCRWPSCQKKFARSDELVRHHNMH. K444 is covalently cross-linked (Glycyl lysine isopeptide (Lys-Gly) (interchain with G-Cter in SUMO2)).

The protein belongs to the EGR C2H2-type zinc-finger protein family. In terms of assembly, homodimer. Interacts with WTIP. Interacts with actively translating polysomes. Detected in nuclear ribonucleoprotein (mRNP) particles. Interacts with HNRNPU via the zinc-finger region. Interacts with U2AF2. Interacts with CITED2. Interacts with ZNF224 via the zinc-finger region. Interacts with WTAP and SRY. Interacts with AMER1. Interacts with RBM4. Expressed in the kidney and a subset of hematopoietic cells.

The protein localises to the nucleus. It localises to the nucleolus. It is found in the cytoplasm. The protein resides in the nucleus speckle. Its subcellular location is the nucleoplasm. Transcription factor that plays an important role in cellular development and cell survival. Recognizes and binds to the DNA sequence 5'-GCG(T/G)GGGCG-3'. Regulates the expression of numerous target genes, including EPO. Plays an essential role for development of the urogenital system. It has a tumor suppressor as well as an oncogenic role in tumor formation. Function may be isoform-specific: isoforms lacking the KTS motif may act as transcription factors. Isoforms containing the KTS motif may bind mRNA and play a role in mRNA metabolism or splicing. Isoform 1 has lower affinity for DNA, and can bind RNA. This chain is Wilms tumor protein (WT1), found in Homo sapiens (Human).